The primary structure comprises 75 residues: Antitoxin MT0312 (75 aa).

Functionally, antitoxin component of a type II toxin-antitoxin (TA) system. The polypeptide is Antitoxin MT0312 (Mycobacterium tuberculosis (strain CDC 1551 / Oshkosh)).